Here is a 449-residue protein sequence, read N- to C-terminus: 23S rRNA (uracil(1939)-C(5))-methyltransferase RlmD (449 aa).

The TRAM domain occupies 15 to 73; it reads KAIPAKNLTVTVTSLDPFGQGVARHEGKTVFVTGVLPGEQAEVQLTEDKRQFSHAKLKR. [4Fe-4S] cluster-binding residues include Cys-86, Cys-92, Cys-95, and Cys-173. 6 residues coordinate S-adenosyl-L-methionine: Gln-276, Phe-305, Asn-310, Glu-326, Asn-353, and Asp-374. The active-site Nucleophile is the Cys-400.

Belongs to the class I-like SAM-binding methyltransferase superfamily. RNA M5U methyltransferase family. RlmD subfamily.

The enzyme catalyses uridine(1939) in 23S rRNA + S-adenosyl-L-methionine = 5-methyluridine(1939) in 23S rRNA + S-adenosyl-L-homocysteine + H(+). Catalyzes the formation of 5-methyl-uridine at position 1939 (m5U1939) in 23S rRNA. The sequence is that of 23S rRNA (uracil(1939)-C(5))-methyltransferase RlmD from Pectobacterium carotovorum subsp. carotovorum (strain PC1).